We begin with the raw amino-acid sequence, 473 residues long: Photosystem II CP43 reaction center protein (473 aa).

A propeptide spanning residues 1 to 14 (MKILYSQRRFYPVE) is cleaved from the precursor. T15 is modified (N-acetylthreonine). Position 15 is a phosphothreonine (T15). 5 helical membrane-spanning segments follow: residues 69–93 (LFEV…PHLA), 134–155 (LIGP…KDKN), 178–200 (KALY…RKIT), 255–275 (KPFA…LSYS), and 291–312 (WFNN…ASQA). [CaMn4O5] cluster is bound at residue E367. The helical transmembrane segment at 447–471 (RARAAAAGFEKGIDRDFEPVLSMTP) threads the bilayer.

It belongs to the PsbB/PsbC family. PsbC subfamily. PSII is composed of 1 copy each of membrane proteins PsbA, PsbB, PsbC, PsbD, PsbE, PsbF, PsbH, PsbI, PsbJ, PsbK, PsbL, PsbM, PsbT, PsbX, PsbY, PsbZ, Psb30/Ycf12, at least 3 peripheral proteins of the oxygen-evolving complex and a large number of cofactors. It forms dimeric complexes. Requires Binds multiple chlorophylls and provides some of the ligands for the Ca-4Mn-5O cluster of the oxygen-evolving complex. It may also provide a ligand for a Cl- that is required for oxygen evolution. PSII binds additional chlorophylls, carotenoids and specific lipids. as cofactor. Phosphorylated on threonine residue(s).

It localises to the plastid. The protein resides in the chloroplast thylakoid membrane. In terms of biological role, one of the components of the core complex of photosystem II (PSII). It binds chlorophyll and helps catalyze the primary light-induced photochemical processes of PSII. PSII is a light-driven water:plastoquinone oxidoreductase, using light energy to abstract electrons from H(2)O, generating O(2) and a proton gradient subsequently used for ATP formation. The sequence is that of Photosystem II CP43 reaction center protein from Marchantia polymorpha (Common liverwort).